The sequence spans 501 residues: NAD(P)H-quinone oxidoreductase chain 4, chloroplastic (501 aa).

The next 14 helical transmembrane spans lie at 5–25 (FPWL…IFFL), 38–58 (ICIC…HFQL), 85–105 (GLSI…TLAA), 112–130 (SRLF…IGSF), 135–155 (LLLF…LLAM), 168–188 (FILY…GIGL), 209–229 (ALEI…LPII), 243–263 (HYST…YGLV), 275–295 (SIFS…AALT), 306–326 (IAYS…SITD), 331–351 (GAIL…FLAG), 387–407 (LALP…GIIT), 417–437 (ILIT…LLSM), and 463–483 (LFVS…PDFV).

Belongs to the complex I subunit 4 family.

The protein localises to the plastid. It localises to the chloroplast thylakoid membrane. The catalysed reaction is a plastoquinone + NADH + (n+1) H(+)(in) = a plastoquinol + NAD(+) + n H(+)(out). It catalyses the reaction a plastoquinone + NADPH + (n+1) H(+)(in) = a plastoquinol + NADP(+) + n H(+)(out). The polypeptide is NAD(P)H-quinone oxidoreductase chain 4, chloroplastic (Eucalyptus globulus subsp. globulus (Tasmanian blue gum)).